The chain runs to 136 residues: Small ribosomal subunit protein bS16 (136 aa).

It belongs to the bacterial ribosomal protein bS16 family.

The protein is Small ribosomal subunit protein bS16 of Pseudarthrobacter chlorophenolicus (strain ATCC 700700 / DSM 12829 / CIP 107037 / JCM 12360 / KCTC 9906 / NCIMB 13794 / A6) (Arthrobacter chlorophenolicus).